Consider the following 650-residue polypeptide: Chaperone protein HtpG (650 aa).

Residues 1–356 (MSTRVETLEF…THDLSLNISR (356 aa)) are a; substrate-binding. Residues 222 to 245 (AKDRDSNDDGTAESGAGAENAGDR) form a disordered region. The segment at 357–572 (EILQQDRRIQ…TFDMTPALEK (216 aa)) is b. A c region spans residues 573–650 (MYRAMGHEMP…LLAERLAEAL (78 aa)).

It belongs to the heat shock protein 90 family. Homodimer.

It localises to the cytoplasm. Its function is as follows. Molecular chaperone. Has ATPase activity. This chain is Chaperone protein HtpG, found in Frankia casuarinae (strain DSM 45818 / CECT 9043 / HFP020203 / CcI3).